The chain runs to 338 residues: tRNA N6-adenosine threonylcarbamoyltransferase (338 aa).

Residues His-111 and His-115 each coordinate Fe cation. Residues 134-138, Asp-167, Gly-180, and Asn-275 each bind substrate; that span reads LLSGG. Asp-304 serves as a coordination point for Fe cation.

This sequence belongs to the KAE1 / TsaD family. Fe(2+) is required as a cofactor.

The protein localises to the cytoplasm. The catalysed reaction is L-threonylcarbamoyladenylate + adenosine(37) in tRNA = N(6)-L-threonylcarbamoyladenosine(37) in tRNA + AMP + H(+). Required for the formation of a threonylcarbamoyl group on adenosine at position 37 (t(6)A37) in tRNAs that read codons beginning with adenine. Is involved in the transfer of the threonylcarbamoyl moiety of threonylcarbamoyl-AMP (TC-AMP) to the N6 group of A37, together with TsaE and TsaB. TsaD likely plays a direct catalytic role in this reaction. The sequence is that of tRNA N6-adenosine threonylcarbamoyltransferase from Leptospira borgpetersenii serovar Hardjo-bovis (strain JB197).